Consider the following 293-residue polypeptide: Cbb3-type cytochrome c oxidase subunit FixP (293 aa).

Basic and acidic residues predominate over residues 1–11 (MSTSHESHHAP). The disordered stretch occupies residues 1–25 (MSTSHESHHAPVDGAGGPSTTGHEW). The helical transmembrane segment at 43 to 63 (FYATIIWAFGYWVAYPAWPLV) threads the bilayer. Cytochrome c domains lie at 114-201 (LARA…RSLS) and 209-290 (PAAK…HTLG). Heme c-binding residues include Cys127, Cys130, His131, Met178, Cys222, Cys225, His226, and Met267.

The protein belongs to the CcoP / FixP family. As to quaternary structure, component of the cbb3-type cytochrome c oxidase at least composed of FixN, FixO, FixQ and FixP. It depends on heme c as a cofactor.

Its subcellular location is the cell inner membrane. It functions in the pathway energy metabolism; oxidative phosphorylation. Its function is as follows. C-type cytochrome. Part of the cbb3-type cytochrome c oxidase complex. FixP subunit is required for transferring electrons from donor cytochrome c via its heme groups to FixO subunit. From there, electrons are shuttled to the catalytic binuclear center of FixN subunit where oxygen reduction takes place. The complex also functions as a proton pump. In Azorhizobium caulinodans (strain ATCC 43989 / DSM 5975 / JCM 20966 / LMG 6465 / NBRC 14845 / NCIMB 13405 / ORS 571), this protein is Cbb3-type cytochrome c oxidase subunit FixP.